A 336-amino-acid polypeptide reads, in one-letter code: Glyceraldehyde-3-phosphate dehydrogenase (336 aa).

NAD(+)-binding positions include 12–13 (RI), aspartate 34, arginine 78, and threonine 121. D-glyceraldehyde 3-phosphate contacts are provided by residues 151 to 153 (SCT), threonine 182, arginine 199, 212 to 213 (TG), and arginine 235. The active-site Nucleophile is the cysteine 152. Asparagine 316 is a binding site for NAD(+).

It belongs to the glyceraldehyde-3-phosphate dehydrogenase family. In terms of assembly, homotetramer.

The protein localises to the cytoplasm. It carries out the reaction D-glyceraldehyde 3-phosphate + phosphate + NAD(+) = (2R)-3-phospho-glyceroyl phosphate + NADH + H(+). It participates in carbohydrate degradation; glycolysis; pyruvate from D-glyceraldehyde 3-phosphate: step 1/5. Its function is as follows. Also binds human plasminogen. In terms of biological role, catalyzes the oxidative phosphorylation of glyceraldehyde 3-phosphate (G3P) to 1,3-bisphosphoglycerate (BPG) using the cofactor NAD. The first reaction step involves the formation of a hemiacetal intermediate between G3P and a cysteine residue, and this hemiacetal intermediate is then oxidized to a thioester, with concomitant reduction of NAD to NADH. The reduced NADH is then exchanged with the second NAD, and the thioester is attacked by a nucleophilic inorganic phosphate to produce BPG. The protein is Glyceraldehyde-3-phosphate dehydrogenase (gap) of Streptococcus pyogenes.